The chain runs to 149 residues: Calmodulin (149 aa).

Position 2 is an N-acetylalanine (alanine 2). EF-hand domains lie at 8–43 (EQIAEFKEAFSLFDKDGDGTITTKELGTVMRSLGQN), 44–79 (PTEAELQDMINEVDSDGNGTIDFPEFLSLMARKMKD), 81–116 (DTEEELIEAFKVFDRDGNGFISAAELRHVMTNLGEK), and 117–149 (LTDEEVDEMIREADVDGDGQINYEEFVKMMMAK). Aspartate 21, aspartate 23, aspartate 25, threonine 27, glutamate 32, aspartate 57, aspartate 59, asparagine 61, threonine 63, glutamate 68, aspartate 94, aspartate 96, asparagine 98, and glutamate 105 together coordinate Ca(2+). Residue lysine 116 is modified to N6,N6,N6-trimethyllysine. The Ca(2+) site is built by aspartate 130, aspartate 132, aspartate 134, glutamine 136, and glutamate 141.

The protein belongs to the calmodulin family.

Calmodulin mediates the control of a large number of enzymes, ion channels and other proteins by Ca(2+). Among the enzymes to be stimulated by the calmodulin-Ca(2+) complex are a number of protein kinases and phosphatases. This is Calmodulin from Heterocapsa triquetra (Dinoflagellate).